The following is a 938-amino-acid chain: E3 ubiquitin-protein ligase CBL-B (938 aa).

Residues 35-167 (PPKQAAADRR…KAIFPNGQFQ (133 aa)) form a 4H region. The 309-residue stretch at 35 to 343 (PPKQAAADRR…GRSYNPDLTG (309 aa)) folds into the Cbl-PTB domain. The interval 168–240 (GDNFRITKAD…FEFDIFTRLF (73 aa)) is EF-hand-like. D221, T223, N225, Y227, and E232 together coordinate Ca(2+). The tract at residues 241-343 (QPWGSILRNW…GRSYNPDLTG (103 aa)) is SH2-like. A Phosphoserine; by PKC/PRKCQ modification is found at S282. R286 serves as a coordination point for 4-O-phospho-L-tyrosine. Residues 344–372 (LCEPTPHDHIKVTQEQYELYCEMGSTFQL) form a linker region. Phosphotyrosine is present on Y363. The segment at 373–412 (CKICAENDKDVKIEPCGHLMCTSCLTAWQESDGQGCPFCR) adopts an RING-type zinc-finger fold. Positions 465-588 (ASVRKCTDRQ…SVPSRDQPMP (124 aa)) are disordered. Positions 473–486 (RQNSPVTSPGSSPL) are enriched in polar residues. Phosphoserine is present on residues S476, S480, S484, S521, S525, and S529. Positions 543-567 (PLPAPPPPLRDPPPPPERPPPIPPD) are interaction with VAV1. A compositionally biased stretch (pro residues) spans 544–566 (LPAPPPPLRDPPPPPERPPPIPP). S633 bears the Phosphoserine mark. Phosphotyrosine occurs at positions 664 and 708. 2 disordered regions span residues 702-725 (EEDDDEYKIPSSHPVSLNSQPSHC) and 771-885 (DALP…EAAL). Positions 714–724 (HPVSLNSQPSH) are enriched in polar residues. Pro residues predominate over residues 775–784 (PSLPPPPPPA). The span at 794 to 804 (PPGSSSRPSSG) shows a compositional bias: low complexity. The span at 839 to 855 (NRASQDYDQLPSSSDGS) shows a compositional bias: polar residues. Y845 is modified (phosphotyrosine). The segment at 847 to 883 (QLPSSSDGSQAPARPPKPRPRRTAPEIHHRKPHGPEA) is interaction with SH3KBP1. The span at 862-878 (PKPRPRRTAPEIHHRKP) shows a compositional bias: basic residues. A UBA domain is found at 887-926 (NVDAKIAKLMGEGYAFEEVKRALEIAQNNLEVARSILREF).

In terms of assembly, interacts with SH3 domain-containing proteins LCK, CRK and SORBS1. Interacts with LCP2 and ZAP70. Interacts with CBL. Interacts with SH3 domain-containing proteins VAV1, FYN, FGR, PLCG1, GRB2, CRKL, PIK3R1 and SH3KBP1/CIN85. Identified in heterotrimeric complexes with SH3KBP1/CIN85, CD2AP and ARHGEF7, where one CBLB peptide binds two copies of the other protein. Interacts with poly-ubiquitinated proteins. Dimerization is required for the binding of poly-ubiquitin, but not for the binding of mono-ubiquitin. Interacts with EGFR (phosphorylated). Interacts with IFT20. Phosphorylated on tyrosine and serine residues upon TCR or BCR activation, and upon various types of cell stimulation. Post-translationally, auto-ubiquitinated upon EGF-mediated cell activation or upon T-cell costimulation by CD28; which promotes proteasomal degradation.

It is found in the cytoplasm. The enzyme catalyses S-ubiquitinyl-[E2 ubiquitin-conjugating enzyme]-L-cysteine + [acceptor protein]-L-lysine = [E2 ubiquitin-conjugating enzyme]-L-cysteine + N(6)-ubiquitinyl-[acceptor protein]-L-lysine.. It participates in protein modification; protein ubiquitination. E3 ubiquitin-protein ligase which accepts ubiquitin from specific E2 ubiquitin-conjugating enzymes, and transfers it to substrates, generally promoting their degradation by the proteasome. Negatively regulates TCR (T-cell receptor), BCR (B-cell receptor) and FCER1 (high affinity immunoglobulin epsilon receptor) signal transduction pathways. In naive T-cells, inhibits VAV1 activation upon TCR engagement and imposes a requirement for CD28 costimulation for proliferation and IL-2 production. Also acts by promoting PIK3R1/p85 ubiquitination, which impairs its recruitment to the TCR and subsequent activation. In activated T-cells, inhibits PLCG1 activation and calcium mobilization upon restimulation and promotes anergy. In B-cells, acts by ubiquitinating SYK and promoting its proteasomal degradation. Slightly promotes SRC ubiquitination. May be involved in EGFR ubiquitination and internalization. May be functionally coupled with the E2 ubiquitin-protein ligase UB2D3. In association with CBL, required for proper feedback inhibition of ciliary platelet-derived growth factor receptor-alpha (PDGFRA) signaling pathway via ubiquitination and internalization of PDGFRA. The chain is E3 ubiquitin-protein ligase CBL-B (Cblb) from Rattus norvegicus (Rat).